The following is a 146-amino-acid chain: Large ribosomal subunit protein eL32 (146 aa).

It belongs to the eukaryotic ribosomal protein eL32 family.

This Methanocaldococcus jannaschii (strain ATCC 43067 / DSM 2661 / JAL-1 / JCM 10045 / NBRC 100440) (Methanococcus jannaschii) protein is Large ribosomal subunit protein eL32 (rpl32e).